Here is an 87-residue protein sequence, read N- to C-terminus: MKTKLNELLEFPCSFTYKVMGLAEPELVNQVVEVVQRHAPGDYSPQVKPSSKGNYHSVSITINATHIEQVETLYEELGNLELVRVVL.

It belongs to the UPF0250 family.

The sequence is that of UPF0250 protein plu1293 from Photorhabdus laumondii subsp. laumondii (strain DSM 15139 / CIP 105565 / TT01) (Photorhabdus luminescens subsp. laumondii).